The primary structure comprises 147 residues: Sec-independent protein translocase protein TatB (147 aa).

Residues 1-21 (MFDFGFSELIVIAVVTLIVVG) traverse the membrane as a helical segment. The tract at residues 117-147 (APAPMSLAPHGDAASAGREPAAVPGSGPEKA) is disordered.

The protein belongs to the TatB family. As to quaternary structure, the Tat system comprises two distinct complexes: a TatABC complex, containing multiple copies of TatA, TatB and TatC subunits, and a separate TatA complex, containing only TatA subunits. Substrates initially bind to the TatABC complex, which probably triggers association of the separate TatA complex to form the active translocon.

It is found in the cell inner membrane. In terms of biological role, part of the twin-arginine translocation (Tat) system that transports large folded proteins containing a characteristic twin-arginine motif in their signal peptide across membranes. Together with TatC, TatB is part of a receptor directly interacting with Tat signal peptides. TatB may form an oligomeric binding site that transiently accommodates folded Tat precursor proteins before their translocation. This chain is Sec-independent protein translocase protein TatB, found in Aromatoleum aromaticum (strain DSM 19018 / LMG 30748 / EbN1) (Azoarcus sp. (strain EbN1)).